Here is a 356-residue protein sequence, read N- to C-terminus: Trifolitoxin operon protein TfxC (356 aa).

In Rhizobium leguminosarum bv. trifolii, this protein is Trifolitoxin operon protein TfxC (tfxC).